The sequence spans 631 residues: Glutamyl-tRNA(Gln) amidotransferase subunit E (631 aa).

Belongs to the GatB/GatE family. GatE subfamily. As to quaternary structure, heterodimer of GatD and GatE.

It carries out the reaction L-glutamyl-tRNA(Gln) + L-glutamine + ATP + H2O = L-glutaminyl-tRNA(Gln) + L-glutamate + ADP + phosphate + H(+). In terms of biological role, allows the formation of correctly charged Gln-tRNA(Gln) through the transamidation of misacylated Glu-tRNA(Gln) in organisms which lack glutaminyl-tRNA synthetase. The reaction takes place in the presence of glutamine and ATP through an activated gamma-phospho-Glu-tRNA(Gln). The GatDE system is specific for glutamate and does not act on aspartate. This is Glutamyl-tRNA(Gln) amidotransferase subunit E from Methanococcus maripaludis (strain C6 / ATCC BAA-1332).